We begin with the raw amino-acid sequence, 1057 residues long: Probable E3 ubiquitin-protein ligase HERC4 (1057 aa).

RCC1 repeat units lie at residues 1-51 (MLCW…FVLD), 52-101 (DGTV…ALND), 102-154 (KGQV…ALSK), 156-207 (SEVF…VLTL), 208-259 (SGAI…ALTK), 261-311 (GGVF…AFVP), and 313-366 (SGRI…CVKR). The 328-residue stretch at 730–1057 (KNIDYKKPLK…IDHNEGFSLI (328 aa)) folds into the HECT domain. Cysteine 1025 functions as the Glycyl thioester intermediate in the catalytic mechanism.

It localises to the cytoplasm. Its subcellular location is the cytosol. The catalysed reaction is S-ubiquitinyl-[E2 ubiquitin-conjugating enzyme]-L-cysteine + [acceptor protein]-L-lysine = [E2 ubiquitin-conjugating enzyme]-L-cysteine + N(6)-ubiquitinyl-[acceptor protein]-L-lysine.. The protein operates within protein modification; protein ubiquitination. Probable E3 ubiquitin-protein ligase involved in either protein trafficking or in the distribution of cellular structures. Required for spermatozoon maturation and fertility, and for the removal of the cytoplasmic droplet of the spermatozoon. E3 ubiquitin-protein ligases accept ubiquitin from an E2 ubiquitin-conjugating enzyme in the form of a thioester and then directly transfer it to targeted substrates. The protein is Probable E3 ubiquitin-protein ligase HERC4 (Herc4) of Rattus norvegicus (Rat).